Consider the following 261-residue polypeptide: 3-hydroxyacyl-CoA dehydrogenase type-2 (261 aa).

Residue A2 is modified to N-acetylalanine. NAD(+) is bound by residues S20, L22, and D41. K53 carries the N6-acetyllysine; alternate modification. The residue at position 53 (K53) is an N6-succinyllysine; alternate. V65 serves as a coordination point for NAD(+). K69 carries the post-translational modification N6-acetyllysine. Position 91 (C91) interacts with NAD(+). An N6-acetyllysine mark is found at K99 and K105. S155 serves as a coordination point for substrate. NAD(+) contacts are provided by Y168, K172, F201, and T203. The active-site Proton acceptor is Y168. An N6-acetyllysine; alternate modification is found at K212. K212 is modified (N6-succinyllysine; alternate).

The protein belongs to the short-chain dehydrogenases/reductases (SDR) family. Homotetramer. Component of mitochondrial ribonuclease P, a complex composed of TRMT10C/MRPP1, HSD17B10/MRPP2 and PRORP/MRPP3. Interacts with TRMT10C/MRPP1; forming the MRPP1-MRPP2 subcomplex of the mitochondrial ribonuclease P complex.

The protein resides in the mitochondrion. Its subcellular location is the mitochondrion matrix. It localises to the mitochondrion nucleoid. The enzyme catalyses a (3S)-3-hydroxyacyl-CoA + NAD(+) = a 3-oxoacyl-CoA + NADH + H(+). It carries out the reaction (2S,3S)-3-hydroxy-2-methylbutanoyl-CoA + NAD(+) = 2-methyl-3-oxobutanoyl-CoA + NADH + H(+). It catalyses the reaction testosterone + NAD(+) = androst-4-ene-3,17-dione + NADH + H(+). The catalysed reaction is 5alpha-androstane-3alpha,17beta-diol + NAD(+) = 17beta-hydroxy-5alpha-androstan-3-one + NADH + H(+). The enzyme catalyses 17beta-estradiol + NAD(+) = estrone + NADH + H(+). It carries out the reaction cholate + NAD(+) = 3alpha,12alpha-dihydroxy-7-oxo-5beta-cholanate + NADH + H(+). It catalyses the reaction (3S)-3-hydroxybutanoyl-CoA + NAD(+) = acetoacetyl-CoA + NADH + H(+). The catalysed reaction is (3S)-hydroxyoctanoyl-CoA + NAD(+) = 3-oxooctanoyl-CoA + NADH + H(+). The enzyme catalyses (3S)-hydroxyhexadecanoyl-CoA + NAD(+) = 3-oxohexadecanoyl-CoA + NADH + H(+). It carries out the reaction 17beta-hydroxy-5alpha-androstan-3-one + NAD(+) = 5alpha-androstan-3,17-dione + NADH + H(+). It catalyses the reaction 5alpha-pregnan-20beta-ol-3-one + NAD(+) = 5alpha-pregnane-3,20-dione + NADH + H(+). The catalysed reaction is 3alpha-hydroxy-5alpha-pregnan-20-one + NAD(+) = 5alpha-pregnane-3,20-dione + NADH + H(+). The enzyme catalyses cortisone + NAD(+) = 17alpha-hydroxypregn-4-en-3,11,20-trione-21-al + NADH + H(+). It carries out the reaction 11-dehydrocorticosterone + NAD(+) = pregn-4-ene-3,11,20,21-tetraone + NADH + H(+). It catalyses the reaction cortisol + NAD(+) = 11beta,17alpha-dihydroxypregn-4-ene-3,20,21-trione + NADH + H(+). The catalysed reaction is chenodeoxycholate + NAD(+) = 7-oxolithocholate + NADH + H(+). The enzyme catalyses ursodeoxycholate + NAD(+) = 7-oxolithocholate + NADH + H(+). It carries out the reaction 3beta,7beta-dihydroxy-5beta-cholan-24-oate + NAD(+) = 3beta-hydroxy-7-oxo-5beta-cholan-24-oate + NADH + H(+). It participates in amino-acid degradation; L-isoleucine degradation. Its pathway is lipid metabolism; fatty acid beta-oxidation. It functions in the pathway steroid metabolism. The protein operates within lipid metabolism; bile acid biosynthesis. Functionally, mitochondrial dehydrogenase involved in pathways of fatty acid, branched-chain amino acid and steroid metabolism. Acts as (S)-3-hydroxyacyl-CoA dehydrogenase in mitochondrial fatty acid beta-oxidation, a major degradation pathway of fatty acids. Catalyzes the third step in the beta-oxidation cycle, namely the reversible conversion of (S)-3-hydroxyacyl-CoA to 3-ketoacyl-CoA. Preferentially accepts straight medium- and short-chain acyl-CoA substrates with highest efficiency for (3S)-hydroxybutanoyl-CoA. Acts as 3-hydroxy-2-methylbutyryl-CoA dehydrogenase in branched-chain amino acid catabolic pathway. Catalyzes the oxidation of 3-hydroxy-2-methylbutanoyl-CoA into 2-methyl-3-oxobutanoyl-CoA, a step in isoleucine degradation pathway. Has hydroxysteroid dehydrogenase activity toward steroid hormones and bile acids. Catalyzes the oxidation of 3alpha-, 17beta-, 20beta- and 21-hydroxysteroids and 7alpha- and 7beta-hydroxy bile acids. Oxidizes allopregnanolone/brexanolone at the 3alpha-hydroxyl group, which is known to be critical for the activation of gamma-aminobutyric acid receptors (GABAARs) chloride channel. Has phospholipase C-like activity toward cardiolipin and its oxidized species. Likely oxidizes the 2'-hydroxyl in the head group of cardiolipin to form a ketone intermediate that undergoes nucleophilic attack by water and fragments into diacylglycerol, dihydroxyacetone and orthophosphate. Has higher affinity for cardiolipin with oxidized fatty acids and may degrade these species during the oxidative stress response to protect cells from apoptosis. By interacting with intracellular amyloid-beta, it may contribute to the neuronal dysfunction associated with Alzheimer disease (AD). Essential for structural and functional integrity of mitochondria. In terms of biological role, in addition to mitochondrial dehydrogenase activity, moonlights as a component of mitochondrial ribonuclease P, a complex that cleaves tRNA molecules in their 5'-ends. Together with TRMT10C/MRPP1, forms a subcomplex of the mitochondrial ribonuclease P, named MRPP1-MRPP2 subcomplex, which displays functions that are independent of the ribonuclease P activity. The MRPP1-MRPP2 subcomplex catalyzes the formation of N(1)-methylguanine and N(1)-methyladenine at position 9 (m1G9 and m1A9, respectively) in tRNAs; HSD17B10/MRPP2 acting as a non-catalytic subunit. The MRPP1-MRPP2 subcomplex also acts as a tRNA maturation platform: following 5'-end cleavage by the mitochondrial ribonuclease P complex, the MRPP1-MRPP2 subcomplex enhances the efficiency of 3'-processing catalyzed by ELAC2, retains the tRNA product after ELAC2 processing and presents the nascent tRNA to the mitochondrial CCA tRNA nucleotidyltransferase TRNT1 enzyme. Associates with mitochondrial DNA complexes at the nucleoids to initiate RNA processing and ribosome assembly. The chain is 3-hydroxyacyl-CoA dehydrogenase type-2 (Hsd17b10) from Rattus norvegicus (Rat).